The chain runs to 357 residues: Outer membrane protein YedS (357 aa).

A signal peptide spans Met1–Ala21.

Belongs to the Gram-negative porin family.

The protein resides in the cell outer membrane. Forms pores that allow passive diffusion of small molecules across the outer membrane. Plays a role in resistance to carbapenems; this carbapenem-resistant, noncarbapenemase-producing clinical isolate has a deletion in ompF and a mutated marR gene that does not induce expression of this protein. However if this gene is overexpressed, or if wild-type marR is introduced, this leads to decreased resistance to the carbapenem antibiotics ertapenem, imipenem and meropenem. The polypeptide is Outer membrane protein YedS (Escherichia coli).